A 147-amino-acid chain; its full sequence is Cyanate hydratase (147 aa).

Active-site residues include R88, E91, and S114.

This sequence belongs to the cyanase family.

It catalyses the reaction cyanate + hydrogencarbonate + 3 H(+) = NH4(+) + 2 CO2. Its function is as follows. Catalyzes the reaction of cyanate with bicarbonate to produce ammonia and carbon dioxide. The sequence is that of Cyanate hydratase from Albidiferax ferrireducens (strain ATCC BAA-621 / DSM 15236 / T118) (Rhodoferax ferrireducens).